Here is a 336-residue protein sequence, read N- to C-terminus: Holliday junction branch migration complex subunit RuvB (336 aa).

Residues 4 to 184 are large ATPase domain (RuvB-L); that stretch reads ADRLVAPGSI…FGIVQRLEFY (181 aa). ATP is bound by residues isoleucine 23, arginine 24, glycine 65, lysine 68, threonine 69, threonine 70, 131–133, arginine 174, tyrosine 184, and arginine 221; that span reads EDY. Threonine 69 provides a ligand contact to Mg(2+). The interval 185–255 is small ATPAse domain (RuvB-S); sequence QVADLQHIVS…VASQALDMLN (71 aa). A head domain (RuvB-H) region spans residues 258–336; it reads AEGFDYMDRK…HFGITPPQMP (79 aa). 3 residues coordinate DNA: arginine 294, arginine 313, and arginine 318.

The protein belongs to the RuvB family. Homohexamer. Forms an RuvA(8)-RuvB(12)-Holliday junction (HJ) complex. HJ DNA is sandwiched between 2 RuvA tetramers; dsDNA enters through RuvA and exits via RuvB. An RuvB hexamer assembles on each DNA strand where it exits the tetramer. Each RuvB hexamer is contacted by two RuvA subunits (via domain III) on 2 adjacent RuvB subunits; this complex drives branch migration. In the full resolvosome a probable DNA-RuvA(4)-RuvB(12)-RuvC(2) complex forms which resolves the HJ.

Its subcellular location is the cytoplasm. It catalyses the reaction ATP + H2O = ADP + phosphate + H(+). The RuvA-RuvB-RuvC complex processes Holliday junction (HJ) DNA during genetic recombination and DNA repair, while the RuvA-RuvB complex plays an important role in the rescue of blocked DNA replication forks via replication fork reversal (RFR). RuvA specifically binds to HJ cruciform DNA, conferring on it an open structure. The RuvB hexamer acts as an ATP-dependent pump, pulling dsDNA into and through the RuvAB complex. RuvB forms 2 homohexamers on either side of HJ DNA bound by 1 or 2 RuvA tetramers; 4 subunits per hexamer contact DNA at a time. Coordinated motions by a converter formed by DNA-disengaged RuvB subunits stimulates ATP hydrolysis and nucleotide exchange. Immobilization of the converter enables RuvB to convert the ATP-contained energy into a lever motion, pulling 2 nucleotides of DNA out of the RuvA tetramer per ATP hydrolyzed, thus driving DNA branch migration. The RuvB motors rotate together with the DNA substrate, which together with the progressing nucleotide cycle form the mechanistic basis for DNA recombination by continuous HJ branch migration. Branch migration allows RuvC to scan DNA until it finds its consensus sequence, where it cleaves and resolves cruciform DNA. The polypeptide is Holliday junction branch migration complex subunit RuvB (Cronobacter sakazakii (strain ATCC BAA-894) (Enterobacter sakazakii)).